A 315-amino-acid chain; its full sequence is 31 kDa ribonucleoprotein, chloroplastic (315 aa).

The N-terminal 71 residues, Met-1 to Ser-71, are a transit peptide targeting the chloroplast. The tract at residues Ala-114–Pro-133 is disordered. The span at Gly-115–Pro-133 shows a compositional bias: acidic residues. 2 consecutive RRM domains span residues Ala-136–Arg-214 and Tyr-230–Asp-308.

Its subcellular location is the plastid. It is found in the chloroplast. Could be involved in splicing and/or processing of chloroplast RNA's. This is 31 kDa ribonucleoprotein, chloroplastic from Nicotiana sylvestris (Wood tobacco).